The sequence spans 304 residues: Probable aspartoacylase (304 aa).

The Zn(2+) site is built by histidine 13 and glutamate 16. Residues arginine 55 and 62–63 (NR) each bind substrate. Zn(2+) is bound at residue histidine 105. Substrate contacts are provided by glutamate 163 and tyrosine 273.

It belongs to the AspA/AstE family. Aspartoacylase subfamily. Requires Zn(2+) as cofactor.

The enzyme catalyses an N-acyl-L-aspartate + H2O = a carboxylate + L-aspartate. In Prochlorococcus marinus (strain MIT 9313), this protein is Probable aspartoacylase.